The chain runs to 493 residues: tRNA(Ile)-lysidine synthase (493 aa).

26–31 (SGGSDS) is an ATP binding site.

The protein belongs to the tRNA(Ile)-lysidine synthase family.

The protein resides in the cytoplasm. The catalysed reaction is cytidine(34) in tRNA(Ile2) + L-lysine + ATP = lysidine(34) in tRNA(Ile2) + AMP + diphosphate + H(+). Ligates lysine onto the cytidine present at position 34 of the AUA codon-specific tRNA(Ile) that contains the anticodon CAU, in an ATP-dependent manner. Cytidine is converted to lysidine, thus changing the amino acid specificity of the tRNA from methionine to isoleucine. The chain is tRNA(Ile)-lysidine synthase from Bartonella henselae (strain ATCC 49882 / DSM 28221 / CCUG 30454 / Houston 1) (Rochalimaea henselae).